The following is a 127-amino-acid chain: Large-conductance mechanosensitive channel (127 aa).

The next 2 membrane-spanning stretches (helical) occupy residues 14-34 (VLDLAVGVIIGGAFTGLVKSL) and 69-89 (GAFLNDVINFLITAFVVFLIV).

The protein belongs to the MscL family. Homopentamer.

The protein resides in the cell membrane. Functionally, channel that opens in response to stretch forces in the membrane lipid bilayer. May participate in the regulation of osmotic pressure changes within the cell. This chain is Large-conductance mechanosensitive channel, found in Leuconostoc mesenteroides subsp. mesenteroides (strain ATCC 8293 / DSM 20343 / BCRC 11652 / CCM 1803 / JCM 6124 / NCDO 523 / NBRC 100496 / NCIMB 8023 / NCTC 12954 / NRRL B-1118 / 37Y).